A 475-amino-acid polypeptide reads, in one-letter code: Ribulose bisphosphate carboxylase large chain (475 aa).

Residues 1 to 2 (MS) constitute a propeptide that is removed on maturation. At P3 the chain carries N-acetylproline. The residue at position 14 (K14) is an N6,N6,N6-trimethyllysine. Substrate is bound by residues N123 and T173. K175 acts as the Proton acceptor in catalysis. K177 lines the substrate pocket. K201, D203, and E204 together coordinate Mg(2+). The residue at position 201 (K201) is an N6-carboxylysine. The active-site Proton acceptor is H294. R295, H327, and S379 together coordinate substrate.

Belongs to the RuBisCO large chain family. Type I subfamily. Heterohexadecamer of 8 large chains and 8 small chains; disulfide-linked. The disulfide link is formed within the large subunit homodimers. Mg(2+) is required as a cofactor. The disulfide bond which can form in the large chain dimeric partners within the hexadecamer appears to be associated with oxidative stress and protein turnover.

It is found in the plastid. The protein resides in the chloroplast. The catalysed reaction is 2 (2R)-3-phosphoglycerate + 2 H(+) = D-ribulose 1,5-bisphosphate + CO2 + H2O. The enzyme catalyses D-ribulose 1,5-bisphosphate + O2 = 2-phosphoglycolate + (2R)-3-phosphoglycerate + 2 H(+). In terms of biological role, ruBisCO catalyzes two reactions: the carboxylation of D-ribulose 1,5-bisphosphate, the primary event in carbon dioxide fixation, as well as the oxidative fragmentation of the pentose substrate in the photorespiration process. Both reactions occur simultaneously and in competition at the same active site. This chain is Ribulose bisphosphate carboxylase large chain, found in Oenothera argillicola (Appalachian evening primrose).